The primary structure comprises 273 residues: Formamidopyrimidine-DNA glycosylase (273 aa).

The Schiff-base intermediate with DNA role is filled by P2. The Proton donor role is filled by E3. The active-site Proton donor; for beta-elimination activity is K58. H92, R111, and K153 together coordinate DNA. An FPG-type zinc finger spans residues 238 to 272 (KVYGREGQSCLSCSSTIIKIKHSGRSTFYCKTCQY). Catalysis depends on R262, which acts as the Proton donor; for delta-elimination activity.

It belongs to the FPG family. As to quaternary structure, monomer. Zn(2+) is required as a cofactor.

It catalyses the reaction Hydrolysis of DNA containing ring-opened 7-methylguanine residues, releasing 2,6-diamino-4-hydroxy-5-(N-methyl)formamidopyrimidine.. The enzyme catalyses 2'-deoxyribonucleotide-(2'-deoxyribose 5'-phosphate)-2'-deoxyribonucleotide-DNA = a 3'-end 2'-deoxyribonucleotide-(2,3-dehydro-2,3-deoxyribose 5'-phosphate)-DNA + a 5'-end 5'-phospho-2'-deoxyribonucleoside-DNA + H(+). Its function is as follows. Involved in base excision repair of DNA damaged by oxidation or by mutagenic agents. Acts as a DNA glycosylase that recognizes and removes damaged bases. Has a preference for oxidized purines, such as 7,8-dihydro-8-oxoguanine (8-oxoG). Has AP (apurinic/apyrimidinic) lyase activity and introduces nicks in the DNA strand. Cleaves the DNA backbone by beta-delta elimination to generate a single-strand break at the site of the removed base with both 3'- and 5'-phosphates. This chain is Formamidopyrimidine-DNA glycosylase, found in Rickettsia africae (strain ESF-5).